Here is a 488-residue protein sequence, read N- to C-terminus: UDP-N-acetylmuramate--L-alanine ligase (488 aa).

Residue 127-133 (GTHGKTT) coordinates ATP.

This sequence belongs to the MurCDEF family.

Its subcellular location is the cytoplasm. It catalyses the reaction UDP-N-acetyl-alpha-D-muramate + L-alanine + ATP = UDP-N-acetyl-alpha-D-muramoyl-L-alanine + ADP + phosphate + H(+). The protein operates within cell wall biogenesis; peptidoglycan biosynthesis. Its function is as follows. Cell wall formation. The protein is UDP-N-acetylmuramate--L-alanine ligase of Shewanella sp. (strain ANA-3).